An 80-amino-acid chain; its full sequence is uncharacterized protein (80 aa).

This is an uncharacterized protein from Invertebrate iridescent virus 6 (IIV-6).